The following is a 347-amino-acid chain: NADH-quinone oxidoreductase subunit H (347 aa).

The next 8 helical transmembrane spans lie at 13-33, 82-102, 115-135, 161-181, 198-218, 248-268, 283-303, and 321-341; these read LLILLKSVVLIVVLLIFVAYI, GVFLLAPLVSAVLAISAWAVI, VGILYVFAISSLEVYGVIMGG, IGFVIVTVLLTAGSLNLSDIV, FLDWNWLALFPMFIIFFISAL, FLLFFLGEYVAIVLMCALATI, FTWVPGVIWFVLKVCFVFFGI, and LGWKVFLPISLFMVVATAAFL.

It belongs to the complex I subunit 1 family. NDH-1 is composed of 14 different subunits. Subunits NuoA, H, J, K, L, M, N constitute the membrane sector of the complex.

The protein localises to the cell inner membrane. It carries out the reaction a quinone + NADH + 5 H(+)(in) = a quinol + NAD(+) + 4 H(+)(out). Functionally, NDH-1 shuttles electrons from NADH, via FMN and iron-sulfur (Fe-S) centers, to quinones in the respiratory chain. The immediate electron acceptor for the enzyme in this species is believed to be ubiquinone. Couples the redox reaction to proton translocation (for every two electrons transferred, four hydrogen ions are translocated across the cytoplasmic membrane), and thus conserves the redox energy in a proton gradient. This subunit may bind ubiquinone. The chain is NADH-quinone oxidoreductase subunit H from Mesorhizobium japonicum (strain LMG 29417 / CECT 9101 / MAFF 303099) (Mesorhizobium loti (strain MAFF 303099)).